The chain runs to 595 residues: MRTCYTGEVCRDHLGQTVTLYGWVNRRRDHGGVIFIDLRDRAGLAQIVFDPDNAAFATAERLRNEFCIRVTGLVRPRPEGTANPELASGEVEVLCKEVEILNASITPPFQLDDDNLSETTRLTHRVLDLRRPQMQRNLMLRYRVSIEVRKFLDQLGFIDIETPMLTKSTPEGARDYLVPSRVNAGHFFALPQSPQLFKQMLMVSGFDRYYQITKCFRDEDLRADRQPEFTQIDCETSFLNEVEIRQIFEDMIRHVFKTVQNVELPAPFPQMTWTEAMQRYGSDKPDLRVSLEFTDVTDVMRDVDFKVFAAAATAPGSRVVALRVPGGAELSRSEIDAYTQFVGIYGAKGLAYIKVNDASKGREGLQSPIVKNLHDAALAELLKRSGAQSGDIIFFGADRAKIVNDAIGALRVKIGHSEFGKKAGLASSDWKPLWVVDFPMFEYDEEDGRYTAAHHPFTSPKDGHEDFLESDPSKAFAKAYDMVLNGWEIGGGSVRIHREEVQSKVFRALKIGAEEAREKFGFLLDALQYGAPPHGGIAFGLDRIVTMMTGAESIRDVIAFPKTQRAQCLLTQAPSEVDEKQLRELHIRLRNVEVK.

Glu-171 provides a ligand contact to L-aspartate. The tract at residues 195–198 is aspartate; sequence QLFK. Arg-217 contacts L-aspartate. ATP-binding positions include 217–219 and Gln-226; that span reads RDE. His-454 is an L-aspartate binding site. Residue Glu-488 coordinates ATP. An L-aspartate-binding site is contributed by Arg-495. 540 to 543 contributes to the ATP binding site; it reads GLDR.

This sequence belongs to the class-II aminoacyl-tRNA synthetase family. Type 1 subfamily. In terms of assembly, homodimer.

Its subcellular location is the cytoplasm. It catalyses the reaction tRNA(Asx) + L-aspartate + ATP = L-aspartyl-tRNA(Asx) + AMP + diphosphate. Its function is as follows. Aspartyl-tRNA synthetase with relaxed tRNA specificity since it is able to aspartylate not only its cognate tRNA(Asp) but also tRNA(Asn). Reaction proceeds in two steps: L-aspartate is first activated by ATP to form Asp-AMP and then transferred to the acceptor end of tRNA(Asp/Asn). The sequence is that of Aspartate--tRNA(Asp/Asn) ligase from Bordetella petrii (strain ATCC BAA-461 / DSM 12804 / CCUG 43448).